The chain runs to 359 residues: UPF0283 membrane protein R01807 (359 aa).

2 consecutive transmembrane segments (helical) span residues 76-96 (FGKIAAGAFGILISLAVGLWI) and 109-129 (WLGYGAVAVVAIGVIAFLIVV).

This sequence belongs to the UPF0283 family.

The protein localises to the cell inner membrane. The chain is UPF0283 membrane protein R01807 from Rhizobium meliloti (strain 1021) (Ensifer meliloti).